We begin with the raw amino-acid sequence, 874 residues long: Alanine--tRNA ligase (874 aa).

Zn(2+)-binding residues include H564, H568, C665, and H669.

This sequence belongs to the class-II aminoacyl-tRNA synthetase family. The cofactor is Zn(2+).

It localises to the cytoplasm. It carries out the reaction tRNA(Ala) + L-alanine + ATP = L-alanyl-tRNA(Ala) + AMP + diphosphate. Functionally, catalyzes the attachment of alanine to tRNA(Ala) in a two-step reaction: alanine is first activated by ATP to form Ala-AMP and then transferred to the acceptor end of tRNA(Ala). Also edits incorrectly charged Ser-tRNA(Ala) and Gly-tRNA(Ala) via its editing domain. The protein is Alanine--tRNA ligase of Burkholderia multivorans (strain ATCC 17616 / 249).